The primary structure comprises 79 residues: Translational regulator CsrA (79 aa).

The protein belongs to the CsrA/RsmA family. In terms of assembly, homodimer; the beta-strands of each monomer intercalate to form a hydrophobic core, while the alpha-helices form wings that extend away from the core.

It is found in the cytoplasm. Its function is as follows. A translational regulator that binds mRNA to regulate translation initiation and/or mRNA stability. Usually binds in the 5'-UTR at or near the Shine-Dalgarno sequence preventing ribosome-binding, thus repressing translation. Its main target seems to be the major flagellin gene, while its function is anatagonized by FliW. This chain is Translational regulator CsrA, found in Shouchella clausii (strain KSM-K16) (Alkalihalobacillus clausii).